The primary structure comprises 2812 residues: Zonadhesin (2812 aa).

A signal peptide spans 1 to 17 (MVPPVWTLLLLVGAALF). Residues 18–2757 (RKEKPPDQKL…DAPPPRKPAS (2740 aa)) lie on the Extracellular side of the membrane. MAM domains are found at residues 39-204 (TQCD…SCNR), 209-368 (QTCS…PCGE), and 371-536 (PQCD…TCPV). Positions 61 to 84 (EDWVRASGPSPTGSTGAPGGYPNG) are disordered. The segment covering 66–75 (ASGPSPTGST) has biased composition (low complexity). Residues Asn333 and Asn493 are each glycosylated (N-linked (GlcNAc...) asparagine). Disordered regions lie at residues 545–884 (VSPV…PTEK) and 904–929 (EKPT…KPTI). Low complexity predominate over residues 547-558 (PVSSTGPSETTG). Polar residues predominate over residues 559–570 (LTENPTISTKKP). The tract at residues 573–1041 (SIEKPSVTTE…GTTTTSRSST (469 aa)) is 66 X heptapeptide repeats (approximate) (mucin-like domain). Low complexity-rich tracts occupy residues 592 to 603 (TIPTEKPTISTE), 651 to 675 (TEKP…MEEP), 713 to 842 (SPEK…STEK), 853 to 868 (STEK…TISP), and 916 to 929 (STEK…KPTI). In terms of domain architecture, TIL 1 spans 1044 to 1093 (CPPNARYESCACPASCKSPRPSCGPLCREGCVCNPGFLFSDNHCIQASSC). The region spanning 1103–1148 (EPGAEWFSPNCTEHCRCWPGSRVECQISQCGTHTVCQLKNGQYGCH) is the VWFC 1 domain. N-linked (GlcNAc...) asparagine glycans are attached at residues Asn1112 and Asn1188. One can recognise a VWFD 1 domain in the interval 1154 to 1331 (ATCLVYGDPH…TDQDEDQECQ (178 aa)). Cystine bridges form between Cys1156–Cys1291 and Cys1178–Cys1330. A compositionally biased stretch (basic and acidic residues) spans 1302–1316 (HLKLDGSPAGDKEEL). The disordered stretch occupies residues 1302–1323 (HLKLDGSPAGDKEELGNSWQTD). Residues 1426–1479 (CPPNSKYSLCAKPCPDTCHSGFSGMFCSDRCVEACECNPGFVLSGLECIPRSQC) enclose the TIL 2 domain. Residues 1480–1535 (GCLHPAGSYFKVGERWYKPGCKELCVCESNNRIRCQPWRCRAQEFCGQQDGIYGCH) form the VWFC 2 domain. The 181-residue stretch at 1540 to 1720 (ATCTASGDPH…LPESSEPGCF (181 aa)) folds into the VWFD 2 domain. Disulfide bonds link Cys1542/Cys1680 and Cys1564/Cys1719. N-linked (GlcNAc...) asparagine glycosylation is found at Asn1685 and Asn1804. One can recognise a TIL 3 domain in the interval 1812–1867 (CPPGSSYSPCSSPCPDTCSSINNPRDCPKALPCAESCECQKGHILSGTSCVPLGQC). In terms of domain architecture, VWFC 3 spans 1868-1924 (GCTDPAGSYHPVGERWYTENTCTRLCTCSVHNNITCFQSTCKPNQICWALDGLLHCR). N-linked (GlcNAc...) asparagine glycans are attached at residues Asn1900 and Asn1946. The region spanning 1929-2108 (GVCQLPGESH…KDKDIDPSCQ (180 aa)) is the VWFD 3 domain. 2 disulfide bridges follow: Cys1931/Cys2069 and Cys1953/Cys2107. A glycan (N-linked (GlcNAc...) asparagine) is linked at Asn2203. Positions 2211-2267 (CPAYSSYTNCLPSCSPSCWDLDGRCEGAKVPSACAEGCICQPGYVLSEDKCVPRSQC) constitute a TIL 4 domain. Residues 2268-2329 (GCKDAHGGSI…NSNCVSDKSE (62 aa)) enclose the VWFC 4 domain. In terms of domain architecture, VWFD 4 spans 2329 to 2505 (EQCSVYGDPR…SWEVKTEDAL (177 aa)). Cys2331 and Cys2468 form a disulfide bridge. Residues Asn2542 and Asn2701 are each glycosylated (N-linked (GlcNAc...) asparagine). One can recognise a VWFC 5 domain in the interval 2652-2797 (CGCTSNGIYY…KREKTQEGDR (146 aa)). Positions 2708-2744 (PESPCLQNPCQNDGQCREQGATFTCECEVGYGGGLCM) constitute an EGF-like domain. 3 disulfide bridges follow: Cys2712–Cys2723, Cys2717–Cys2732, and Cys2734–Cys2743. The helical transmembrane segment at 2758 to 2778 (NLVGVLLGLLVPVVVVLLAVT) threads the bilayer. The Cytoplasmic portion of the chain corresponds to 2779-2812 (RECIYRTRRKREKTQEGDRLARLVDTDTVLDCAC).

As to quaternary structure, probably forms covalent oligomers. In testis, primarily in haploid spermatids.

The protein localises to the cell membrane. Binds in a species-specific manner to the zona pellucida of the egg. May be involved in gamete recognition and/or signaling. The sequence is that of Zonadhesin (ZAN) from Homo sapiens (Human).